The chain runs to 371 residues: Dual-specificity RNA methyltransferase RlmN (371 aa).

Glu114 functions as the Proton acceptor in the catalytic mechanism. Residues 120–352 (EEDHFTLCVS…VMTRQSKGAD (233 aa)) form the Radical SAM core domain. A disulfide bridge links Cys127 with Cys357. Positions 134, 138, and 141 each coordinate [4Fe-4S] cluster. S-adenosyl-L-methionine-binding positions include 183–184 (GE), Ser216, 238–240 (SLN), and Asn314. Cys357 acts as the S-methylcysteine intermediate in catalysis.

Belongs to the radical SAM superfamily. RlmN family. [4Fe-4S] cluster serves as cofactor.

The protein resides in the cytoplasm. The enzyme catalyses adenosine(2503) in 23S rRNA + 2 reduced [2Fe-2S]-[ferredoxin] + 2 S-adenosyl-L-methionine = 2-methyladenosine(2503) in 23S rRNA + 5'-deoxyadenosine + L-methionine + 2 oxidized [2Fe-2S]-[ferredoxin] + S-adenosyl-L-homocysteine. It catalyses the reaction adenosine(37) in tRNA + 2 reduced [2Fe-2S]-[ferredoxin] + 2 S-adenosyl-L-methionine = 2-methyladenosine(37) in tRNA + 5'-deoxyadenosine + L-methionine + 2 oxidized [2Fe-2S]-[ferredoxin] + S-adenosyl-L-homocysteine. Specifically methylates position 2 of adenine 2503 in 23S rRNA and position 2 of adenine 37 in tRNAs. m2A2503 modification seems to play a crucial role in the proofreading step occurring at the peptidyl transferase center and thus would serve to optimize ribosomal fidelity. The chain is Dual-specificity RNA methyltransferase RlmN from Desulfosudis oleivorans (strain DSM 6200 / JCM 39069 / Hxd3) (Desulfococcus oleovorans).